The following is a 387-amino-acid chain: Zinc finger transcription factor YY1 (387 aa).

5 consecutive C2H2-type zinc fingers follow at residues 79–103 (FLCSYDGCGKTFFDVSALRKHSHIH), 108–132 (YVCDQEGCGKKFLDSSKLKRHYLIH), 138–162 (YICTYEGCGKAFSLDFNLRSHMKTH), 168–193 (HICPYSGCVKRYAHEYKLKNHVAAYH), and 230–255 (YACPYEGCEKAYIHEYKLKLHLKREH). Positions 201 to 290 (TPKYTPPAEK…DDGSDQDVYR (90 aa)) are MED18-binding. Residues 258-387 (HLQEENADTP…DDDEETEYED (130 aa)) form a disordered region. Position 284 is a phosphoserine (serine 284). Basic residues predominate over residues 291-305 (KHASNGKGQTHKQQS). A Nuclear localization signal motif is present at residues 319 to 326 (GKKGSTSS). Residues 339–367 (AKETFEEVEREEEEDSEETEEDRDNVEDG) adopt a coiled-coil conformation. 2 stretches are compositionally biased toward acidic residues: residues 344–363 (EEVEREEEEDSEETEEDRDN) and 373–387 (NNEDDDDDEETEYED).

In terms of assembly, interacts with MED18 to suppress disease susceptibility via the repression of genes glutaredoxins GRX480, GRXS13 and thioredoxin TRX-h5. As to expression, mostly expressed in flowers, to a lower extent in seedlings, stems and leaves, and, at low levels, in roots and senescent leaves.

Its subcellular location is the nucleus. Its function is as follows. Dual-function transcription factor with both repression and activation activities. Binds to 5'-CCATATT-3' motif in target gene promoters (e.g. ABR1). Also binds to G-rich DNA motif 5'-GGGGGCAGTGG-3'. Regulates the expression of genes involved in diverse cellular pathways, including glucose metabolism, photosynthesis, phototropism and stress response (e.g. salt, drought and osmotic stress). Regulates plant immunity, especially during necrotrophic fungal infection (e.g. B.cinerea). Binds to ABR1 promoter and promotes its expression, thus negatively regulating the abscisic acid (ABA) signaling pathway. Represses ABA- and salt-responsive genes expression. The sequence is that of Zinc finger transcription factor YY1 from Arabidopsis thaliana (Mouse-ear cress).